A 100-amino-acid polypeptide reads, in one-letter code: Integration host factor subunit alpha (100 aa).

It belongs to the bacterial histone-like protein family. In terms of assembly, heterodimer of an alpha and a beta chain.

Functionally, this protein is one of the two subunits of integration host factor, a specific DNA-binding protein that functions in genetic recombination as well as in transcriptional and translational control. The sequence is that of Integration host factor subunit alpha from Caulobacter sp. (strain K31).